The primary structure comprises 218 residues: Glutathione S-transferase Mu 3 (218 aa).

The GST N-terminal domain occupies 2 to 88; it reads PMTLGYWNTR…YLGRKHNLCG (87 aa). Residues 7–8, 46–50, and 59–60 contribute to the glutathione site; these read YW, WLSEK, and NL. A Glycyl lysine isopeptide (Lys-Gly) (interchain with G-Cter in SUMO2) cross-link involves residue K50. A Glycyl lysine isopeptide (Lys-Gly) (interchain with G-Cter in SUMO2) cross-link involves residue K69. 72–73 provides a ligand contact to glutathione; sequence QS. One can recognise a GST C-terminal domain in the interval 90–208; that stretch reads TEEERIRVDT…KSSRFLPRPV (119 aa).

This sequence belongs to the GST superfamily. Mu family. Homodimer.

It is found in the cytoplasm. The catalysed reaction is RX + glutathione = an S-substituted glutathione + a halide anion + H(+). Its function is as follows. Conjugation of reduced glutathione to a wide number of exogenous and endogenous hydrophobic electrophiles. The chain is Glutathione S-transferase Mu 3 (Gstm3) from Mus musculus (Mouse).